A 153-amino-acid chain; its full sequence is Ribosome maturation factor RimP (153 aa).

It belongs to the RimP family.

It is found in the cytoplasm. Functionally, required for maturation of 30S ribosomal subunits. The polypeptide is Ribosome maturation factor RimP (Clostridium botulinum (strain ATCC 19397 / Type A)).